We begin with the raw amino-acid sequence, 340 residues long: Phosphoribosylformylglycinamidine cyclo-ligase (340 aa).

It belongs to the AIR synthase family.

The protein resides in the cytoplasm. It carries out the reaction 2-formamido-N(1)-(5-O-phospho-beta-D-ribosyl)acetamidine + ATP = 5-amino-1-(5-phospho-beta-D-ribosyl)imidazole + ADP + phosphate + H(+). Its pathway is purine metabolism; IMP biosynthesis via de novo pathway; 5-amino-1-(5-phospho-D-ribosyl)imidazole from N(2)-formyl-N(1)-(5-phospho-D-ribosyl)glycinamide: step 2/2. In Streptococcus pneumoniae (strain 70585), this protein is Phosphoribosylformylglycinamidine cyclo-ligase.